Here is a 404-residue protein sequence, read N- to C-terminus: High affinity immunoglobulin gamma Fc receptor I (404 aa).

The N-terminal stretch at 1–24 is a signal peptide; sequence MILTSFGDDMWLLTTLLLWVPVGG. The Extracellular segment spans residues 25–297; it reads EVVNATKAVI…QVLGPQSSAP (273 aa). Residues Asn28, Asn48, Asn69, Asn168, and Asn249 are each glycosylated (N-linked (GlcNAc...) asparagine). 3 consecutive Ig-like C2-type domains span residues 32 to 111, 117 to 194, and 201 to 286; these read AVIT…LQIH, LQAS…SITV, and PVLR…PELE. Disulfide bonds link Cys53–Cys95, Cys134–Cys177, and Cys221–Cys269. The helical transmembrane segment at 298-320 threads the bilayer; the sequence is VWFHILFYLSVGIMFSLNTVLYV. An interaction with EPB41L2 region spans residues 321–342; that stretch reads KIHRLQREKKYNLEVPLVSEQG. Residues 321 to 404 are Cytoplasmic-facing; that stretch reads KIHRLQREKK…DSTGAQTSQS (84 aa). Positions 346-404 are disordered; that stretch reads NSFQQVRSDGVYEEVTATASQTTPKEAPDGPRSSVGDCGPEQPEPLPPSDSTGAQTSQS. Ser347 bears the Phosphoserine mark. Thr368 bears the Phosphothreonine mark. Over residues 394–404 the composition is skewed to polar residues; that stretch reads SDSTGAQTSQS.

Belongs to the immunoglobulin superfamily. FCGR1 family. As to quaternary structure, interacts with FCERG1; forms a functional signaling complex. Interacts with FLNA; prevents FCGR1A degradation. Interacts with EPB41L2, LAT and PPL. Interacts with HCK and LYN. In terms of processing, N-glycosylated. Phosphorylated on serine residues. Macrophage-specific.

Its subcellular location is the cell membrane. Functionally, high affinity receptor for the Fc region of immunoglobulins gamma. Functions in both innate and adaptive immune responses. This chain is High affinity immunoglobulin gamma Fc receptor I (Fcgr1), found in Mus musculus (Mouse).